A 360-amino-acid polypeptide reads, in one-letter code: Probable cinnamyl alcohol dehydrogenase 9 (360 aa).

Residue cysteine 50 coordinates Zn(2+). Threonine 52 serves as a coordination point for NADP(+). 7 residues coordinate Zn(2+): histidine 72, glutamate 73, cysteine 103, cysteine 106, cysteine 109, cysteine 117, and cysteine 166. Residues threonine 170, glycine 191–glycine 196, serine 214–lysine 219, threonine 254, glycine 278, and serine 301–valine 303 contribute to the NADP(+) site.

Belongs to the zinc-containing alcohol dehydrogenase family. In terms of assembly, homodimer. Requires Zn(2+) as cofactor. As to expression, expressed in the vasculature of the primary root and elongation regions. Expressed in the hypocotyl, cotyledon veins, vasculature of the first rosette leaves, and hydathodes. In stems, expressed in the vascular cambium, interfascicular cambium, developing xylem, and phloem. Expressed in the entire floral organs at late developing stage, and in the abscission, style and stigmatic regions of siliques and seed funicules.

It carries out the reaction (E)-cinnamyl alcohol + NADP(+) = (E)-cinnamaldehyde + NADPH + H(+). It participates in aromatic compound metabolism; phenylpropanoid biosynthesis. Involved in lignin biosynthesis. May catalyze the final step specific for the production of lignin monomers, like coniferyl alcohol, sinapyl alcohol and 4-coumaryl alcohol. This chain is Probable cinnamyl alcohol dehydrogenase 9 (CAD9), found in Arabidopsis thaliana (Mouse-ear cress).